Here is a 621-residue protein sequence, read N- to C-terminus: Cryptochrome-1 (621 aa).

In terms of domain architecture, Photolyase/cryptochrome alpha/beta spans Val3–Leu132. 3 consecutive short sequence motifs (LIR) follow at residues Asn50–Phe54, Asp82–Leu87, and Lys151–Leu156. Residue Ser252 participates in FAD binding. 4 consecutive short sequence motifs (LIR) follow at residues Leu255–Leu260, Asp271–Val276, Ser285–Leu290, and Thr335–Trp339. Residue Gln289 coordinates FAD. His355 is a binding site for FAD. The LIR 8 motif lies at Lys379–Leu384. Asp387–Asp389 lines the FAD pocket. Short sequence motifs (LIR) lie at residues Gly395–Leu400, His411–Val416, Arg430–Val435, Gln486–Leu491, and Ser492–Leu497. Positions Gln581–Asn621 are disordered.

This sequence belongs to the DNA photolyase class-1 family. As to quaternary structure, component of the circadian core oscillator, which includes the CRY proteins, CLOCK or NPAS2, BMAL1 or BMAL2, CSNK1E, and the PER proteins. FAD is required as a cofactor. (6R)-5,10-methylene-5,6,7,8-tetrahydrofolate serves as cofactor. As to expression, expressed in the pineal gland.

Its subcellular location is the cytoplasm. It localises to the nucleus. In terms of biological role, transcriptional repressor which forms a core component of the circadian clock. The circadian clock, an internal time-keeping system, regulates various physiological processes through the generation of approximately 24 hour circadian rhythms in gene expression, which are translated into rhythms in metabolism and behavior. It is derived from the Latin roots 'circa' (about) and 'diem' (day) and acts as an important regulator of a wide array of physiological functions including metabolism, sleep, body temperature, blood pressure, endocrine, immune, cardiovascular, and renal function. Consists of two major components: the central clock, residing in the suprachiasmatic nucleus (SCN) of the brain, and the peripheral clocks that are present in nearly every tissue and organ system. Both the central and peripheral clocks can be reset by environmental cues, also known as Zeitgebers (German for 'timegivers'). The predominant Zeitgeber for the central clock is light, which is sensed by retina and signals directly to the SCN. The central clock entrains the peripheral clocks through neuronal and hormonal signals, body temperature and feeding-related cues, aligning all clocks with the external light/dark cycle. Circadian rhythms allow an organism to achieve temporal homeostasis with its environment at the molecular level by regulating gene expression to create a peak of protein expression once every 24 hours to control when a particular physiological process is most active with respect to the solar day. Transcription and translation of core clock components (CLOCK, NPAS2, BMAL1, BMAL2, PER1, PER2, PER3, CRY1 and CRY2) plays a critical role in rhythm generation, whereas delays imposed by post-translational modifications (PTMs) are important for determining the period (tau) of the rhythms (tau refers to the period of a rhythm and is the length, in time, of one complete cycle). A diurnal rhythm is synchronized with the day/night cycle, while the ultradian and infradian rhythms have a period shorter and longer than 24 hours, respectively. Disruptions in the circadian rhythms contribute to the pathology of cardiovascular diseases, cancer, metabolic syndromes and aging. A transcription/translation feedback loop (TTFL) forms the core of the molecular circadian clock mechanism. Transcription factors, CLOCK or NPAS2 and BMAL1 or BMAL2, form the positive limb of the feedback loop, act in the form of a heterodimer and activate the transcription of core clock genes and clock-controlled genes (involved in key metabolic processes), harboring E-box elements (5'-CACGTG-3') within their promoters. The core clock genes: PER1/2/3 and CRY1/2 which are transcriptional repressors form the negative limb of the feedback loop and interact with the CLOCK|NPAS2-BMAL1|BMAL2 heterodimer inhibiting its activity and thereby negatively regulating their own expression. This heterodimer also activates nuclear receptors NR1D1/2 and RORA/B/G, which form a second feedback loop and which activate and repress BMAL1 transcription, respectively. CRY1 and CRY2 have redundant functions but also differential and selective contributions at least in defining the pace of the SCN circadian clock and its circadian transcriptional outputs. More potent transcriptional repressor in cerebellum and liver than CRY2, though more effective in lengthening the period of the SCN oscillator. On its side, CRY2 seems to play a critical role in tuning SCN circadian period by opposing the action of CRY1. With CRY2, is dispensable for circadian rhythm generation but necessary for the development of intercellular networks for rhythm synchrony. Capable of translocating circadian clock core proteins such as PER proteins to the nucleus. Interacts with CLOCK-BMAL1 independently of PER proteins and is found at CLOCK-BMAL1-bound sites, suggesting that CRY may act as a molecular gatekeeper to maintain CLOCK-BMAL1 in a poised and repressed state until the proper time for transcriptional activation. Represses CLOCK-BMAL1-mediated transcriptional activation. In Gallus gallus (Chicken), this protein is Cryptochrome-1 (CRY1).